A 290-amino-acid polypeptide reads, in one-letter code: Ribosomal protein L11 methyltransferase (290 aa).

S-adenosyl-L-methionine-binding residues include Thr136, Gly159, Asp181, and Asn228.

Belongs to the methyltransferase superfamily. PrmA family.

It localises to the cytoplasm. It catalyses the reaction L-lysyl-[protein] + 3 S-adenosyl-L-methionine = N(6),N(6),N(6)-trimethyl-L-lysyl-[protein] + 3 S-adenosyl-L-homocysteine + 3 H(+). Functionally, methylates ribosomal protein L11. This Allorhizobium ampelinum (strain ATCC BAA-846 / DSM 112012 / S4) (Agrobacterium vitis (strain S4)) protein is Ribosomal protein L11 methyltransferase.